A 975-amino-acid chain; its full sequence is E3 ubiquitin-protein ligase BRE1A (975 aa).

The interval 1–30 (MSGIGNKRAAGEPGTSMPPEKKAAVEDSGT) is disordered. K21 bears the N6-acetyllysine mark. S41 carries the phosphoserine modification. Residues 43-90 (TEELDIRTLQTKNRKLAEMLDQRQAIEDELREHIEKLERRQATDDASL) adopt a coiled-coil conformation. Residues 125-155 (KALVVPEPEPDSDSNQERKDDRERGEGQEPA) form a disordered region. 2 positions are modified to phosphoserine: S136 and S138. Basic and acidic residues predominate over residues 139-151 (NQERKDDRERGEG). Coiled-coil stretches lie at residues 168–375 (EEME…EQVV) and 429–898 (SLHK…TTKK). 2 positions are modified to N6-acetyllysine: K348 and K510. Positions 507–622 (DLNKTRLRSG…GKHDDGRKKE (116 aa)) are disordered. Residue S522 is modified to Phosphoserine. Basic and acidic residues predominate over residues 527–540 (EDPKDEPAELKPDS). A compositionally biased stretch (low complexity) spans 543–552 (LSSQSSASKA). Over residues 558–622 (NEIKSKRDEE…GKHDDGRKKE (65 aa)) the composition is skewed to basic and acidic residues. Position 562 is a phosphoserine (S562). Residues 922–961 (CPCCNMRKKDAVLTKCFHVFCFECVKTRYDTRQRKCPKCN) form an RING-type zinc finger.

Belongs to the BRE1 family. In terms of assembly, component of the RNF20/40 complex (also known as BRE1 complex) probably composed of 2 copies of RNF20/BRE1A and 2 copies of RNF40/BRE1B. Interacts with UBE2E1/UBCH6. Interacts with p53/TP53 and WAC. Interacts with PAF1; the interaction mediates the association of the PAF1 and RNF20/40 complexes which is a prerequsite for recruitment of UBE2A/B. Interacts with isoform 1 and isoform 2 of PA2G4. Interacts with FBXL19. As to quaternary structure, (Microbial infection) Interacts with human herpesvirus 8 (KSHV) protein RTA/ORF50; this interaction targets the SMC5-SMC6 complex for proteasomal degradation. In terms of tissue distribution, expressed in the normal brain and also in malignant gliomas (at protein level).

It is found in the nucleus. The enzyme catalyses S-ubiquitinyl-[E2 ubiquitin-conjugating enzyme]-L-cysteine + [acceptor protein]-L-lysine = [E2 ubiquitin-conjugating enzyme]-L-cysteine + N(6)-ubiquitinyl-[acceptor protein]-L-lysine.. It functions in the pathway protein modification; protein ubiquitination. Its function is as follows. Component of the RNF20/40 E3 ubiquitin-protein ligase complex that mediates monoubiquitination of 'Lys-120' of histone H2B (H2BK120ub1). H2BK120ub1 gives a specific tag for epigenetic transcriptional activation and is also prerequisite for histone H3 'Lys-4' and 'Lys-79' methylation (H3K4me and H3K79me, respectively). It thereby plays a central role inb histone code and gene regulation. The RNF20/40 complex forms a H2B ubiquitin ligase complex in cooperation with the E2 enzyme UBE2A or UBE2B; reports about the cooperation with UBE2E1/UBCH are contradictory. Required for transcriptional activation of Hox genes. Recruited to the MDM2 promoter, probably by being recruited by p53/TP53, and thereby acts as a transcriptional coactivator. Mediates the polyubiquitination of isoform 2 of PA2G4 in cancer cells leading to its proteasome-mediated degradation. Functionally, (Microbial infection) Promotes the human herpesvirus 8 (KSHV) lytic cycle by inducing the expression of lytic viral genes including the latency switch gene RTA/ORF50. This chain is E3 ubiquitin-protein ligase BRE1A (RNF20), found in Homo sapiens (Human).